Here is a 295-residue protein sequence, read N- to C-terminus: UTP--glucose-1-phosphate uridylyltransferase (295 aa).

It belongs to the UDPGP type 2 family.

It carries out the reaction alpha-D-glucose 1-phosphate + UTP + H(+) = UDP-alpha-D-glucose + diphosphate. May play a role in stationary phase survival. The chain is UTP--glucose-1-phosphate uridylyltransferase (galU) from Haemophilus influenzae (strain ATCC 51907 / DSM 11121 / KW20 / Rd).